The chain runs to 630 residues: A-type voltage-gated potassium channel KCND2 (630 aa).

Residues 1–184 (MAAGVAAWLP…FENPHTSTMA (184 aa)) are Cytoplasmic-facing. The interval 2 to 20 (AAGVAAWLPFARAAAIGWM) is interaction with KCNIP1, KCNIP2, and other family members. Threonine 38 is subject to Phosphothreonine. Residues 71–90 (ERDFFYHPETQQYFFDRDPD) are interaction with KCNIP1. Histidine 105, cysteine 111, cysteine 132, and cysteine 133 together coordinate Zn(2+). The helical transmembrane segment at 185 to 206 (LVFYYVTGFFIAVSVIANVVET) threads the bilayer. The Extracellular portion of the chain corresponds to 207–226 (VPCGSSPGHIKELPCGERYA). A helical transmembrane segment spans residues 227–249 (VAFFCLDTACVMIFTVEYLLRLA). Over 250 to 256 (AAPSRYR) the chain is Cytoplasmic. The helical transmembrane segment at 257–281 (FVRSVMSIIDVVAILPYYIGLVMTD) threads the bilayer. The Extracellular portion of the chain corresponds to 282-287 (NEDVSG). The helical; Voltage-sensor transmembrane segment at 288 to 307 (AFVTLRVFRVFRIFKFSRHS) threads the bilayer. Over 308–321 (QGLRILGYTLKSCA) the chain is Cytoplasmic. The S4-S5 linker stretch occupies residues 308–321 (QGLRILGYTLKSCA). The helical transmembrane segment at 322–345 (SELGFLLFSLTMAIIIFATVMFYA) threads the bilayer. Over 346–357 (EKGSSASKFTSI) the chain is Extracellular. An intramembrane region (helical) is located at residues 358–369 (PAAFWYTIVTMT). Positions 370, 371, 372, and 373 each coordinate K(+). A Selectivity filter motif is present at residues 370–375 (TLGYGD). Residues 370-377 (TLGYGDMV) lie within the membrane without spanning it. Topologically, residues 378–380 (PKT) are extracellular. The chain crosses the membrane as a helical span at residues 381–403 (IAGKIFGSICSLSGVLVIALPVP). Residues 404–630 (VIVSNFSRIY…GGNIVRVSAL (227 aa)) are Cytoplasmic-facing. Serine 438 is modified (phosphoserine). The segment at 474–489 (FETQHHHLLHCLEKTT) is required for dendritic targeting. An important for normal channel activation and inactivation, for interaction with KCNIP2, and probably other family members as well region spans residues 474–630 (FETQHHHLLH…GGNIVRVSAL (157 aa)). Phosphoserine occurs at positions 548, 552, 572, and 575. The segment at 600 to 623 (IPTPPVTTPEGDDRPESPEYSGGN) is disordered. Threonine 602 and threonine 607 each carry phosphothreonine. Residue serine 616 is modified to Phosphoserine. A PDZ-binding motif is present at residues 627 to 630 (VSAL).

It belongs to the potassium channel family. D (Shal) (TC 1.A.1.2) subfamily. Kv4.2/KCND2 sub-subfamily. As to quaternary structure, homotetramer or heterotetramer with KCND1 or KCND3. Associates with the regulatory subunits KCNIP2, KCNIP3 and KCNIP4. Interacts with the regulatory subunit KCNIP1; this interaction mediates the capture of both the N- and C-terminus of KCND2, preventing N-type inactivation and stabilizing the S6 conformation, thereby accelerating closed state inactivation and recovery. Interacts with DPP10, DLG4 and DLG1. In vivo, probably exists as heteromeric complex containing variable proportions of KCND1, KCND2, KCND3, KCNIP1, KCNIP2, KCNIP3, KCNIP4, DPP6 and DPP10. The tetrameric channel can associate with up to four regulatory subunits, such as KCNIP2 or KCNIP4. Interaction with KCNIP3 promotes tetramerization and formation of a functional potassium channel. Interaction with four KCNIP4 chains does not reduce interaction with DPP10. Probably part of a complex consisting of KCNIP1, KCNIP2 isoform 3 and KCND2. Interacts with FLNA and FLNC. Interacts with NCS1/FREQ. Identified in a complex with cAMP-dependent protein kinase (PKA), CAV3, AKAP6 and KCND3 in cardiac myocytes. Interacts (via S1 and S2 helices) with DPP6; this interaction stabilizes the conformation of the S1-S2 helices and facilitates S4 conformational change, including S4 sliding up and down, thereby accelerating activation, inactivation, and recovery. In terms of processing, phosphorylation at Ser-438 in response to MAPK activation is increased in stimulated dendrites. Interaction with KCNIP2 and DPP6 propomtes phosphorylation by PKA at Ser-552. Phosphorylation at Ser-552 has no effect on interaction with KCNIP3, but is required for the regulation of channel activity by KCNIP3. Phosphorylation at Ser-552 leads to KCND2 internalization. Phosphorylated by MAPK in response to signaling via the metabotropic glutamate receptor GRM5. Phosphorylation at Ser-616 is required for the down-regulation of neuronal A-type currents in response to signaling via GRM5. In terms of tissue distribution, detected in brain cortex, hippocampus, dentate gyrus, thalamus and cerebellum. Detected in neurons from the primary visual cortex. Detected in the supraoptic nucleus in hypothalamus, in hippocampus and the habenular nucleus of the thalamus. Detected in the bed nucleus of the stria terminalis. Detected in dendritic fields in the hippocampus CA1 layer, in stratum radiatum, stratum oriens, stratum lacunosum-moleculare and stratum pyramidale. Detected in dendritic fields in the hippocampus CA3 layer and in dentate gyrus. Detected in the cerebellum granule cell layer, where it localizes at synapses. Detected in the main olfactory bulb, especially in the granule cell layer and the external plexiform layer, but also the mitral layer. Detected in heart atrium and ventricle. Detected in heart left ventricle (at protein level). Highly expressed in heart and throughout the brain, with similar levels in cortex and hypothalamus, and much higher levels in hippocampus, dentate gyrus and the habenular nucleus of the thalamus. Detected in brain, and at lower levels in heart atrium and ventricle. Detected in neurons from the bed nucleus of the stria terminalis. Detected in aorta, cardiac and smooth muscle.

The protein resides in the cell membrane. It localises to the cell projection. Its subcellular location is the dendrite. The protein localises to the synapse. It is found in the perikaryon. The protein resides in the postsynaptic cell membrane. It localises to the dendritic spine. Its subcellular location is the sarcolemma. The protein localises to the cell junction. It is found in the membrane. The protein resides in the caveola. It carries out the reaction K(+)(in) = K(+)(out). With respect to regulation, inhibited by 5 mM 4-aminopyridine (4-AP). Not inhibited by dendrotoxins and by tetraethylammonium (TEA). Inhibited by 10 mM flecainide and 20 mM quinidine. Inhibited by the heteropodatoxins HpTx(1), HpTx(2), and HpTx(3). Its function is as follows. Voltage-gated potassium channel that mediates transmembrane potassium transport in excitable membranes, primarily in the brain, but also in rodent heart. Mediates the major part of the dendritic A-type current I(SA) in brain neurons. This current is activated at membrane potentials that are below the threshold for action potentials. It regulates neuronal excitability, prolongs the latency before the first spike in a series of action potentials, regulates the frequency of repetitive action potential firing, shortens the duration of action potentials and regulates the back-propagation of action potentials from the neuronal cell body to the dendrites. Contributes to the regulation of the circadian rhythm of action potential firing in suprachiasmatic nucleus neurons, which regulates the circadian rhythm of locomotor activity. Functions downstream of the metabotropic glutamate receptor GRM5 and plays a role in neuronal excitability and in nociception mediated by activation of GRM5. Mediates the transient outward current I(to) in rodent heart left ventricle apex cells, but not in human heart, where this current is mediated by another family member. Forms tetrameric potassium-selective channels through which potassium ions pass in accordance with their electrochemical gradient. The channel alternates between opened and closed conformations in response to the voltage difference across the membrane. Can form functional homotetrameric channels and heterotetrameric channels that contain variable proportions of KCND2 and KCND3; channel properties depend on the type of pore-forming alpha subunits that are part of the channel. In vivo, membranes probably contain a mixture of heteromeric potassium channel complexes. Interaction with specific isoforms of the regulatory subunits KCNIP1, KCNIP2, KCNIP3 or KCNIP4 strongly increases expression at the cell surface and thereby increases channel activity; it modulates the kinetics of channel activation and inactivation, shifts the threshold for channel activation to more negative voltage values, shifts the threshold for inactivation to less negative voltages and accelerates recovery after inactivation. Likewise, interaction with DPP6 or DPP10 promotes expression at the cell membrane and regulates both channel characteristics and activity. Upon depolarization, the channel goes from a resting closed state (C state) to an activated but non-conducting state (C* state), from there, the channel may either inactivate (I state) or open (O state). The chain is A-type voltage-gated potassium channel KCND2 from Rattus norvegicus (Rat).